Reading from the N-terminus, the 324-residue chain is Protease HtpX homolog (324 aa).

2 helical membrane passes run 7–24 (ALLLAGLTALFMGVGYLI) and 29–46 (GALIALVVAAAMNIFTYW). Zn(2+) is bound at residue His130. The active site involves Glu131. His134 is a Zn(2+) binding site. Transmembrane regions (helical) follow at residues 145–165 (ITATIAGAISMVAQFGMFFGG) and 172–192 (GPGLIGSLALMILAPLGAMLV). Glu201 provides a ligand contact to Zn(2+). Over residues 288-305 (PASTFSRGAGTAASSGTP) the composition is skewed to polar residues. The tract at residues 288-324 (PASTFSRGAGTAASSGTPRGTGRSPWGGQPRGRGPWG) is disordered.

The protein belongs to the peptidase M48B family. Zn(2+) is required as a cofactor.

Its subcellular location is the cell inner membrane. The sequence is that of Protease HtpX homolog from Rhodopseudomonas palustris (strain TIE-1).